Reading from the N-terminus, the 565-residue chain is Glycine--tRNA ligase (565 aa).

Positions 98 and 164 each coordinate substrate. Residues 196-198, 206-211, 323-324, and 440-443 each bind ATP; these read RNE, IRLREF, EI, and GIDR. Substrate is bound at residue 211–215; that stretch reads FTQAE. 436–440 is a substrate binding site; it reads EPSFG.

Belongs to the class-II aminoacyl-tRNA synthetase family.

The protein localises to the cytoplasm. The catalysed reaction is tRNA(Gly) + glycine + ATP = glycyl-tRNA(Gly) + AMP + diphosphate. In terms of biological role, catalyzes the attachment of glycine to tRNA(Gly). In Methanothermobacter thermautotrophicus (strain ATCC 29096 / DSM 1053 / JCM 10044 / NBRC 100330 / Delta H) (Methanobacterium thermoautotrophicum), this protein is Glycine--tRNA ligase.